Consider the following 215-residue polypeptide: Cytokinin riboside 5'-monophosphate phosphoribohydrolase LOG4 (215 aa).

Substrate is bound by residues glutamate 84, 102–103 (RK), 119–125 (GYGTLEE), and threonine 131.

The protein belongs to the LOG family. As to expression, expressed in roots and shoots. Detected in root procambium, lateral root primordia, vascular tissues of cotyledons, leaves and stems, shoot apical meristem, axillary buds, young inflorescences, fruit abscission zones and basal part of ovules.

The protein resides in the cytoplasm. It localises to the nucleus. It carries out the reaction N(6)-(dimethylallyl)adenosine 5'-phosphate + H2O = N(6)-dimethylallyladenine + D-ribose 5-phosphate. The enzyme catalyses 9-ribosyl-trans-zeatin 5'-phosphate + H2O = trans-zeatin + D-ribose 5-phosphate. In terms of biological role, cytokinin-activating enzyme working in the direct activation pathway. Phosphoribohydrolase that converts inactive cytokinin nucleotides to the biologically active free-base forms. The polypeptide is Cytokinin riboside 5'-monophosphate phosphoribohydrolase LOG4 (LOG4) (Arabidopsis thaliana (Mouse-ear cress)).